Consider the following 134-residue polypeptide: Snaclec alboaggregin-A subunit alpha' (134 aa).

Positions 1–134 constitute a C-type lectin domain; that stretch reads DFHCLPGWSA…NPFVCKFPPQ (134 aa). 3 disulfides stabilise this stretch: Cys4–Cys15, Cys32–Cys129, and Cys104–Cys121.

Belongs to the snaclec family. In terms of assembly, heterotetramer of the subunits alpha, alpha', beta and beta'; disulfide-linked. As to expression, expressed by the venom gland.

The protein resides in the secreted. In terms of biological role, potent platelet activator that aggregates platelets via both GPIbalpha (GP1BA) and GPVI (GP6). Induces a tyrosine phosphorylation profile in platelets that resembles this produced by collagen, involving the time dependent tyrosine phosphorylation of Fc receptor gamma chain (FCGR1A), phospholipase Cgamma2 (PLCG2), and LAT. In Trimeresurus albolabris (White-lipped pit viper), this protein is Snaclec alboaggregin-A subunit alpha'.